A 591-amino-acid chain; its full sequence is Uncoordinated protein 58 (591 aa).

The tract at residues 1–24 is disordered; that stretch reads MFFYSPNVAPQPSSTSHRRPTLTH. The helical transmembrane segment at 184-204 threads the bilayer; that stretch reads VILVSVLIGYLCLGAWILMLL. Asn-226 carries N-linked (GlcNAc...) asparagine glycosylation. 5 helical membrane passes run 289 to 309, 318 to 338, 400 to 420, 428 to 448, and 453 to 473; these read TFPT…YGEV, VFSV…AADI, PIGA…AMFI, FIHA…GDIV, and IFLS…TMCV.

It belongs to the two pore domain potassium channel (TC 1.A.1.8) family.

Its subcellular location is the membrane. In terms of biological role, has a role in mobility, possibly in the transport of potassium in muscles. The polypeptide is Uncoordinated protein 58 (Caenorhabditis elegans).